The chain runs to 512 residues: SWI/SNF complex subunit SWI3A (512 aa).

The 98-residue stretch at 13 to 110 (YTIPAQSSWF…FSSSLKKNDH (98 aa)) folds into the SWIRM domain. The region spanning 223 to 274 (SAAAVWTEEEILLLLESVLKHGDDWELISQSVSTKSRLDCISKLIELPFGEF) is the SANT domain. The interval 291–325 (DENTEQVQTDGQEHEETETREEKEDRVNEDEPPAK) is disordered. A coiled-coil region spans residues 424 to 488 (ALGAAAAQAK…IEGVKETIIQ (65 aa)).

In terms of assembly, homodimers and heterodimers. Interacts with SWI3B, SWI3C, BSH, and the C-terminus of FCA, but not with BRM or SWI3D. As to expression, expressed in roots, stems, leaves and flowers, but not in siliques.

Its subcellular location is the nucleus. Its function is as follows. Component of a multiprotein complex equivalent of the SWI/SNF complex, an ATP-dependent chromatin-remodeling complex, which is required for the positive and negative regulation of gene expression of a large number of genes. It changes chromatin structure by altering DNA-histone contacts within a nucleosome, leading eventually to a change in nucleosome position, thus facilitating or repressing binding of gene-specific transcription factors. The protein is SWI/SNF complex subunit SWI3A (SWI3A) of Arabidopsis thaliana (Mouse-ear cress).